A 56-amino-acid polypeptide reads, in one-letter code: Ribosome modulation factor (56 aa).

Belongs to the ribosome modulation factor family.

The protein localises to the cytoplasm. In terms of biological role, during stationary phase, converts 70S ribosomes to an inactive dimeric form (100S ribosomes). In Proteus mirabilis (strain HI4320), this protein is Ribosome modulation factor.